We begin with the raw amino-acid sequence, 480 residues long: NADH-quinone oxidoreductase subunit N (480 aa).

Transmembrane regions (helical) follow at residues I13–I33, P41–T61, V81–F101, T107–T127, L132–M152, F167–G187, L212–S232, I245–F265, V276–A296, A314–F334, A373–W393, L413–I433, and P454–F474.

It belongs to the complex I subunit 2 family. As to quaternary structure, NDH-1 is composed of 14 different subunits. Subunits NuoA, H, J, K, L, M, N constitute the membrane sector of the complex.

The protein resides in the cell inner membrane. It carries out the reaction a quinone + NADH + 5 H(+)(in) = a quinol + NAD(+) + 4 H(+)(out). Its function is as follows. NDH-1 shuttles electrons from NADH, via FMN and iron-sulfur (Fe-S) centers, to quinones in the respiratory chain. The immediate electron acceptor for the enzyme in this species is believed to be ubiquinone. Couples the redox reaction to proton translocation (for every two electrons transferred, four hydrogen ions are translocated across the cytoplasmic membrane), and thus conserves the redox energy in a proton gradient. The protein is NADH-quinone oxidoreductase subunit N of Leptospira biflexa serovar Patoc (strain Patoc 1 / Ames).